The following is a 134-amino-acid chain: Methylmalonyl-CoA decarboxylase subunit gamma (134 aa).

The segment covering 28-38 has biased composition (low complexity); it reads APAARPAAAPA. The segment at 28 to 67 is disordered; it reads APAARPAAAPAPAAPKPAAAPAPAPAPKTTAAGAGAGANT. Pro residues predominate over residues 39 to 53; the sequence is PAAPKPAAAPAPAPA. The span at 54 to 67 shows a compositional bias: low complexity; it reads PKTTAAGAGAGANT. Residues 58–134 enclose the Biotinyl-binding domain; the sequence is AAGAGAGANT…NAGDILVVLS (77 aa). The residue at position 100 (Lys-100) is an N6-biotinyllysine.

In terms of assembly, the methylmalonyl-CoA decarboxylase is composed of four subunits: the carboxyltransferase alpha subunit (MmdA), the tunnel beta subunit (MmdB), the biotin-containing gamma subunit (MmdC) and the delta subunit (MmdD). It depends on biotin as a cofactor.

Its subcellular location is the cell membrane. It catalyses the reaction (S)-methylmalonyl-CoA + Na(+)(in) + H(+)(out) = propanoyl-CoA + Na(+)(out) + CO2. Functionally, biotin-containing subunit of the sodium ion pump methylmalonyl-CoA decarboxylase, which converts the chemical energy of a decarboxylation reaction into an electrochemical gradient of Na(+) ions across the cytoplasmic membrane, thereby creating a sodium ion motive force that is used for ATP synthesis. The protein is Methylmalonyl-CoA decarboxylase subunit gamma of Propionigenium modestum.